The chain runs to 739 residues: Disintegrin and metalloproteinase domain-containing protein 18 (739 aa).

Positions 1–16 are cleaved as a signal peptide; the sequence is MFLLLALLTELGRLQA. Positions 17-184 are excised as a propeptide; the sequence is HEGSEGIFLH…IKNLSKLLPQ (168 aa). N-linked (GlcNAc...) asparagine glycosylation is found at Asn-36, Asn-76, Asn-122, Asn-149, Asn-156, Asn-177, and Asn-294. Residues 177–687 are Extracellular-facing; the sequence is NLSKLLPQYL…EKGYNTHWNN (511 aa). The 198-residue stretch at 184–381 folds into the Peptidase M12B domain; sequence QYLEIYIIVE…FETKCLQKLS (198 aa). 4 disulfides stabilise this stretch: Cys-293–Cys-376, Cys-335–Cys-360, Cys-337–Cys-342, and Cys-450–Cys-471. N-linked (GlcNAc...) asparagine glycosylation is found at Asn-359, Asn-465, Asn-561, Asn-611, and Asn-625. The Disintegrin domain maps to 390-479; it reads QPVCGNGILE…NCVPDTYALN (90 aa). One can recognise an EGF-like domain in the interval 620-654; the sequence is MGYNCNATTKCKGKGICNNFGNCQCFPGHRPPDCK. 3 cysteine pairs are disulfide-bonded: Cys-624–Cys-636, Cys-630–Cys-642, and Cys-644–Cys-653. A helical transmembrane segment spans residues 688 to 708; that stretch reads WFILSFCIFLPFFIVFTTVIF. Residues 709-739 lie on the Cytoplasmic side of the membrane; it reads KRNEISKSCNRENAEYNRNSSVVSESDDVGH.

The prodomain and the metalloprotease-like domain are cleaved during the epididymal maturation of the spermatozoa. As to expression, expressed specifically in testis.

Its subcellular location is the membrane. In terms of biological role, sperm surface membrane protein that may be involved in spermatogenesis and fertilization. This is a non catalytic metalloprotease-like protein. The protein is Disintegrin and metalloproteinase domain-containing protein 18 (ADAM18) of Homo sapiens (Human).